A 151-amino-acid chain; its full sequence is UPF0178 protein YaiI (151 aa).

Belongs to the UPF0178 family.

This is UPF0178 protein YaiI from Salmonella agona (strain SL483).